Here is a 964-residue protein sequence, read N- to C-terminus: uncharacterized protein (964 aa).

Over residues 97 to 117 (DSESDVGSDAESDAESDAESD) the composition is skewed to acidic residues. A disordered region spans residues 97–208 (DSESDVGSDA…SNSIDNESES (112 aa)). Residues 121-148 (HTQNNTNTPINNITLINLDSSNNSTQSD) are compositionally biased toward low complexity. Positions 149-163 (NESDNESDNESDNES) are enriched in acidic residues. The segment covering 192-203 (NSDNIGNSNSID) has biased composition (low complexity).

This is an uncharacterized protein from Acanthamoeba polyphaga (Amoeba).